The primary structure comprises 314 residues: MALAARLWRLLPFRRGAAPGSRLPAGTSGSRGHCGPCRFRGFEVMGNPGTFKRGLLLSALSYLGFETYQVISQAAVVHATAKVEEILEQADYLYESGETEKLYQLLTQYKESEDAELLWRLARASRDVAQLSRTSEEEKKLLVYEALEYAKRALEKNESSFASHKWYAICLSDVGDYEGIKAKIANAYIIKEHFEKAIELNPKDATSIHLMGIWCYTFAEMPWYQRRIAKMLFATPPSSTYEKALGYFHRAEQVDPNFYSKNLLLLGKTYLKLHNKKLAAFWLMKAKDYPAHTEEDKQIQTEAAQLLTSFSEKN.

K165 carries the post-translational modification N6-succinyllysine. TPR repeat units follow at residues 168–204 and 222–258; these read AICL…NPKD and PWYQ…DPNF.

It belongs to the RMDN family. In terms of assembly, interacts with microtubules.

The protein localises to the cytoplasm. It localises to the cytoskeleton. The protein resides in the spindle. Its subcellular location is the spindle pole. The protein is Regulator of microtubule dynamics protein 1 (RMDN1) of Homo sapiens (Human).